The following is a 284-amino-acid chain: Formamidopyrimidine-DNA glycosylase (284 aa).

Pro2 serves as the catalytic Schiff-base intermediate with DNA. Catalysis depends on Glu3, which acts as the Proton donor. Lys61 (proton donor; for beta-elimination activity) is an active-site residue. His95, Arg114, and Arg159 together coordinate DNA. The segment at 244-278 adopts an FPG-type zinc-finger fold; sequence WVYGRKGQPCRVCNTPIERIRLAGRSTHFCPTCQR. Arg268 acts as the Proton donor; for delta-elimination activity in catalysis.

It belongs to the FPG family. Monomer. Zn(2+) serves as cofactor.

It catalyses the reaction Hydrolysis of DNA containing ring-opened 7-methylguanine residues, releasing 2,6-diamino-4-hydroxy-5-(N-methyl)formamidopyrimidine.. The enzyme catalyses 2'-deoxyribonucleotide-(2'-deoxyribose 5'-phosphate)-2'-deoxyribonucleotide-DNA = a 3'-end 2'-deoxyribonucleotide-(2,3-dehydro-2,3-deoxyribose 5'-phosphate)-DNA + a 5'-end 5'-phospho-2'-deoxyribonucleoside-DNA + H(+). Functionally, involved in base excision repair of DNA damaged by oxidation or by mutagenic agents. Acts as a DNA glycosylase that recognizes and removes damaged bases. Has a preference for oxidized purines, such as 7,8-dihydro-8-oxoguanine (8-oxoG). Has AP (apurinic/apyrimidinic) lyase activity and introduces nicks in the DNA strand. Cleaves the DNA backbone by beta-delta elimination to generate a single-strand break at the site of the removed base with both 3'- and 5'-phosphates. The sequence is that of Formamidopyrimidine-DNA glycosylase from Gloeobacter violaceus (strain ATCC 29082 / PCC 7421).